A 102-amino-acid polypeptide reads, in one-letter code: P antigen family member 4 (102 aa).

The segment covering 1 to 10 (MSARVRSRSR) has biased composition (basic residues). Residues 1–102 (MSARVRSRSR…KTKEAGDGQP (102 aa)) form a disordered region. Ser-7 bears the Phosphoserine; by CLK2 mark. Ser-9 carries the post-translational modification Phosphoserine; by HIPK1 and CLK2. The span at 45 to 85 (GQEREGTPPIEERKVEGDCQEMDLEKTRSERGDGSDVKEKT) shows a compositional bias: basic and acidic residues. Thr-51 carries the post-translational modification Phosphothreonine; by HIPK1 and CLK2. Phosphothreonine; by CLK2 is present on Thr-71. 2 positions are modified to phosphoserine; by CLK2: Ser-73 and Ser-79. Residues Thr-85 and Thr-94 each carry the phosphothreonine; by CLK2 modification.

Belongs to the GAGE family. In terms of assembly, interacts with JUN. In terms of processing, HIPK1-mediated phosphorylation at Thr-51 leads to the compaction of its intrinsically disordered conformation and is critical for its ability to potentiate the transcriptional activator activity of JUN inspite of a reduced interaction with JUN. CLK2-mediated phosphorylation at multiple Ser and Thr residues attenuates its ability to potentiate JUN transcriptional activator activity. In terms of tissue distribution, expressed at basal lvels in the adult normal prostate gland but is highly up-regulated in the fetal prostate and prostate cancer cells. Preferentially expressed in normal male and female reproductive tissues, testis, fallopian tube, uterus, and placenta, as well as in testicular cancer, uterine cancer, cervical cancer and kidney cancer.

It localises to the cytoplasm. It is found in the nucleus. Its subcellular location is the mitochondrion. Its function is as follows. Intrinsically disordered protein that potentiates the transcriptional activator activity of JUN. Protects cells from stress-induced apoptosis by inhibiting reactive oxygen species (ROS) production and via regulation of the MAPK signaling pathway. The protein is P antigen family member 4 (PAGE4) of Homo sapiens (Human).